The following is a 100-amino-acid chain: Putative protein p52 (100 aa).

The segment at 81-100 (PKSFKSSTDTAHSDRWLSLG) is disordered. Positions 91 to 100 (AHSDRWLSLG) are enriched in basic and acidic residues.

The polypeptide is Putative protein p52 (52) (Escherichia coli (Bacteriophage APSE-1)).